We begin with the raw amino-acid sequence, 179 residues long: Large ribosomal subunit protein uL5 (179 aa).

Belongs to the universal ribosomal protein uL5 family. In terms of assembly, part of the 50S ribosomal subunit; part of the 5S rRNA/L5/L18/L25 subcomplex. Contacts the 5S rRNA and the P site tRNA. Forms a bridge to the 30S subunit in the 70S ribosome.

In terms of biological role, this is one of the proteins that bind and probably mediate the attachment of the 5S RNA into the large ribosomal subunit, where it forms part of the central protuberance. In the 70S ribosome it contacts protein S13 of the 30S subunit (bridge B1b), connecting the 2 subunits; this bridge is implicated in subunit movement. Contacts the P site tRNA; the 5S rRNA and some of its associated proteins might help stabilize positioning of ribosome-bound tRNAs. In Paramagnetospirillum magneticum (strain ATCC 700264 / AMB-1) (Magnetospirillum magneticum), this protein is Large ribosomal subunit protein uL5.